Consider the following 342-residue polypeptide: Tetraacyldisaccharide 4'-kinase (342 aa).

68 to 75 contributes to the ATP binding site; it reads TVGGTGKT.

Belongs to the LpxK family.

The enzyme catalyses a lipid A disaccharide + ATP = a lipid IVA + ADP + H(+). The protein operates within glycolipid biosynthesis; lipid IV(A) biosynthesis; lipid IV(A) from (3R)-3-hydroxytetradecanoyl-[acyl-carrier-protein] and UDP-N-acetyl-alpha-D-glucosamine: step 6/6. Transfers the gamma-phosphate of ATP to the 4'-position of a tetraacyldisaccharide 1-phosphate intermediate (termed DS-1-P) to form tetraacyldisaccharide 1,4'-bis-phosphate (lipid IVA). The polypeptide is Tetraacyldisaccharide 4'-kinase (Burkholderia ambifaria (strain ATCC BAA-244 / DSM 16087 / CCUG 44356 / LMG 19182 / AMMD) (Burkholderia cepacia (strain AMMD))).